Consider the following 483-residue polypeptide: MKTLNRRDFPGAQYPDRIIQFGEGNFLRAFVDWQIDLLNEHTDLNAGIVVVRPIATDFPPSLSTQDGLYTTIIRGLNEQGEAVSDARLIRSVNREISAYADFDAFLRLAHNPEMRFVFSNTTEAGISYHAGDRFDDAPPVSYPAKLTRLLFERYQHFAGAADKGWVIIPCELIDYNGEALQALVLRYAAEWQLPQAFIRWLTSANTFCSTLVDRIVTGYPRDEVAALEAQTGYKDAFLDTAEHFYLFVIQGPASLAAELRLDKLPLNVRIVDDIKPYKERKVAILNGAHTALVPVAFLAGIDTVGEAMNDAEICAFVEKAIYDEIIPVLDLPRDELESFASAVTGRFRNPYIKHQLLSIALNGMTKYRTRILPQLLAGQQKSGQLPPRLTFALAALIAFYRGEREGERYPVQDDAEWLARYQTLWARHRDRQMSTRELVTAVLSVEAHWEQDLSQIPGLVEQVTADLDAILSRGMRDAVQPLC.

18–29 provides a ligand contact to NAD(+); it reads IIQFGEGNFLRA.

This sequence belongs to the mannitol dehydrogenase family. UxaB subfamily.

The catalysed reaction is D-altronate + NAD(+) = keto-D-tagaturonate + NADH + H(+). Its pathway is carbohydrate metabolism; pentose and glucuronate interconversion. The chain is Altronate oxidoreductase from Klebsiella pneumoniae (strain 342).